The chain runs to 874 residues: Ectonucleotide pyrophosphatase/phosphodiesterase family member 3 (874 aa).

Over 1–11 (MDSRLALATEE) the chain is Cytoplasmic. The helical; Signal-anchor for type II membrane protein transmembrane segment at 12-30 (PIKKDSLKKYKILCVVLLA) threads the bilayer. Over 31 to 874 (LLVIVSLGLG…TYLPTFETII (844 aa)) the chain is Extracellular. 2 SMB domains span residues 51-93 (QGSC…VKST) and 94-138 (QIWT…GESP). Disulfide bonds link cysteine 54–cysteine 58, cysteine 54–cysteine 71, cysteine 58–cysteine 89, cysteine 69–cysteine 71, cysteine 69–cysteine 82, cysteine 75–cysteine 81, cysteine 82–cysteine 89, cysteine 98–cysteine 115, cysteine 103–cysteine 133, cysteine 113–cysteine 126, cysteine 119–cysteine 125, cysteine 144–cysteine 190, and cysteine 152–cysteine 364. A Cell attachment site motif is present at residues 78–80 (RGD). Positions 160-544 (PVILFSMDGF…HGSLNHLLKT (385 aa)) are phosphodiesterase. Position 167 (aspartate 167) interacts with Zn(2+). Lysine 204 contacts ATP. Threonine 205 provides a ligand contact to Zn(2+). Threonine 205 functions as the Nucleophile in the catalytic mechanism. Residue asparagine 226 participates in ATP binding. N-linked (GlcNAc...) asparagine glycosylation occurs at asparagine 236. Position 275 (aspartate 275) interacts with ATP. Residues asparagine 279 and asparagine 288 are each glycosylated (N-linked (GlcNAc...) asparagine). Position 289 (tyrosine 289) interacts with ATP. Positions 325, 329, 372, and 373 each coordinate Zn(2+). 6 disulfides stabilise this stretch: cysteine 380–cysteine 477, cysteine 428–cysteine 817, cysteine 561–cysteine 623, cysteine 574–cysteine 679, cysteine 576–cysteine 664, and cysteine 786–cysteine 796. Asparagine 425 carries an N-linked (GlcNAc...) asparagine glycan. Histidine 482 serves as a coordination point for Zn(2+). 4 N-linked (GlcNAc...) asparagine glycosylation sites follow: asparagine 532, asparagine 594, asparagine 687, and asparagine 701. Residues 581 to 874 (NTPGLEEQAN…TYLPTFETII (294 aa)) are nuclease. Aspartate 751, asparagine 753, aspartate 755, histidine 757, and aspartate 759 together coordinate Ca(2+). The N-linked (GlcNAc...) asparagine glycan is linked to asparagine 820.

As to quaternary structure, monomer and homodimer. Zn(2+) is required as a cofactor. In terms of processing, N-glycosylated. N-glycosylation is necessary for normal transport to the cell membrane, but is not the apical targeting signal. As to expression, detected at the tip of villi in the small intestine. Detected on basophils and mast cells (at protein level). Detected in the epithelial layer of the small intestine; expression is higher in the proximal part and lower in the distal part of the small intestine.

It is found in the cell membrane. It localises to the apical cell membrane. The protein localises to the secreted. The enzyme catalyses a ribonucleoside 5'-triphosphate + H2O = a ribonucleoside 5'-phosphate + diphosphate + H(+). The catalysed reaction is UDP-N-acetyl-alpha-D-glucosamine + H2O = N-acetyl-alpha-D-glucosamine 1-phosphate + UMP + 2 H(+). It carries out the reaction ATP + H2O = AMP + diphosphate + H(+). It catalyses the reaction CTP + H2O = CMP + diphosphate + H(+). The enzyme catalyses GTP + H2O = GMP + diphosphate + H(+). The catalysed reaction is UTP + H2O = UMP + diphosphate + H(+). It carries out the reaction Hydrolytically removes 5'-nucleotides successively from the 3'-hydroxy termini of 3'-hydroxy-terminated oligonucleotides.. It catalyses the reaction P(1),P(3)-bis(5'-adenosyl) triphosphate + H2O = AMP + ADP + 2 H(+). The enzyme catalyses P(1),P(4)-bis(5'-adenosyl) tetraphosphate + H2O = AMP + ATP + 2 H(+). The catalysed reaction is P(1),P(5)-bis(5'-adenosyl) pentaphosphate + H2O = adenosine 5'-tetraphosphate + AMP + 2 H(+). It carries out the reaction P(1),P(4)-bis(5'-guanosyl) tetraphosphate + H2O = GMP + GTP + 2 H(+). Its function is as follows. Hydrolase that metabolizes extracellular nucleotides, including ATP, GTP, UTP and CTP. Limits mast cells and basophils response during inflammation and during the chronic phases of allergic responses by eliminating extracellular ATP, a signaling molecule activating these cells in an autocrine manner. Metabolizes extracellular ATP in the lumen of the small intestine, and thereby prevents ATP-induced apoptosis of intestinal plasmacytoid dendritic cells. Has a broad specificity and can also hydrolyze UDP-GlcNAc into UMP and GlcNAc-1-phosphate and potentially several other intracellular nucleotide sugars, including UDP-GalNAc, CMP-NeuAc, GDP-Fuc, and UDP-GlcA. Thereby, could modulate glycan biosynthesis and protein glycosylation. Can hydrolyze extracellular dinucleoside polyphosphates, including the vasoactive adenosine polyphosphates as well. In addition, displays an alkaline phosphodiesterase activity in vitro. The polypeptide is Ectonucleotide pyrophosphatase/phosphodiesterase family member 3 (Mus musculus (Mouse)).